Reading from the N-terminus, the 422-residue chain is MAM and fibronectin type III domain-containing protein 1 (422 aa).

An MAM domain is found at 1 to 75; it reads KFYYHMYGAT…VSLMEGICAG (75 aa). 3 Fibronectin type-III domains span residues 2–74, 196–286, and 291–386; these read FYYH…GICA, PGWN…QART, and PSRA…YIVT.

Component of the acid-insoluble and acid-soluble organic matrix of the aragonitic skeleton (at protein level).

It localises to the secreted. This chain is MAM and fibronectin type III domain-containing protein 1, found in Acropora millepora (Staghorn coral).